The primary structure comprises 348 residues: Lipoyl synthase (348 aa).

The interval 1–45 (MSESAKPRITSGSKFRNEHGFSAIKDGVKRSSSNTEGKSLERKPK) is disordered. [4Fe-4S] cluster-binding residues include Cys-73, Cys-78, Cys-84, Cys-99, Cys-103, Cys-106, and Ser-314. Positions 85-303 (WTNGTATIMV…RDIGLEKGFM (219 aa)) constitute a Radical SAM core domain.

It belongs to the radical SAM superfamily. Lipoyl synthase family. It depends on [4Fe-4S] cluster as a cofactor.

The protein localises to the cytoplasm. The catalysed reaction is [[Fe-S] cluster scaffold protein carrying a second [4Fe-4S](2+) cluster] + N(6)-octanoyl-L-lysyl-[protein] + 2 oxidized [2Fe-2S]-[ferredoxin] + 2 S-adenosyl-L-methionine + 4 H(+) = [[Fe-S] cluster scaffold protein] + N(6)-[(R)-dihydrolipoyl]-L-lysyl-[protein] + 4 Fe(3+) + 2 hydrogen sulfide + 2 5'-deoxyadenosine + 2 L-methionine + 2 reduced [2Fe-2S]-[ferredoxin]. The protein operates within protein modification; protein lipoylation via endogenous pathway; protein N(6)-(lipoyl)lysine from octanoyl-[acyl-carrier-protein]: step 2/2. In terms of biological role, catalyzes the radical-mediated insertion of two sulfur atoms into the C-6 and C-8 positions of the octanoyl moiety bound to the lipoyl domains of lipoate-dependent enzymes, thereby converting the octanoylated domains into lipoylated derivatives. This chain is Lipoyl synthase, found in Marinobacter nauticus (strain ATCC 700491 / DSM 11845 / VT8) (Marinobacter aquaeolei).